Here is an 84-residue protein sequence, read N- to C-terminus: Small ribosomal subunit protein uS17 (84 aa).

The protein belongs to the universal ribosomal protein uS17 family. In terms of assembly, part of the 30S ribosomal subunit.

In terms of biological role, one of the primary rRNA binding proteins, it binds specifically to the 5'-end of 16S ribosomal RNA. The sequence is that of Small ribosomal subunit protein uS17 from Buchnera aphidicola subsp. Cinara cedri (strain Cc).